The sequence spans 343 residues: Phospholipid phosphatase-related protein type 2 (343 aa).

Helical transmembrane passes span 12–32 (FSII…VVLL), 72–92 (ALIY…GELA), and 129–149 (FLGV…AGQV). A glycan (N-linked (GlcNAc...) asparagine) is linked at asparagine 165. 3 helical membrane passes run 210-230 (AALC…VFRV), 239-259 (SLCL…VAEY), and 266-286 (VLAG…CVVH). Residues 291-343 (RPHSGRRLSPWEDLSQAPTMDSPLEKNPRPAGRIRHRHGSPHPSRRTVPAVAT) form a disordered region. Serine 299 and serine 312 each carry phosphoserine. A compositionally biased stretch (basic residues) spans 322 to 335 (GRIRHRHGSPHPSR).

Belongs to the PA-phosphatase related phosphoesterase family.

The protein localises to the membrane. The chain is Phospholipid phosphatase-related protein type 2 from Mus musculus (Mouse).